We begin with the raw amino-acid sequence, 875 residues long: Neurotrypsin (875 aa).

The signal sequence occupies residues 1–20 (MTLARFALALLFGVLPEVVG). N-linked (GlcNAc...) asparagine glycosylation occurs at Asn26. Positions 51 to 72 (QRHRRTRPPPPLPRFPRPPRAL) are disordered. Positions 58-71 (PPPPLPRFPRPPRA) are enriched in pro residues. Positions 93-165 (CPAGEPWVSV…GKVDWGYCDC (73 aa)) constitute a Kringle domain. 20 disulfides stabilise this stretch: Cys93-Cys165, Cys109-Cys149, Cys138-Cys163, Cys195-Cys259, Cys208-Cys269, Cys239-Cys249, Cys305-Cys369, Cys318-Cys379, Cys349-Cys359, Cys412-Cys475, Cys425-Cys485, Cys455-Cys465, Cys525-Cys589, Cys538-Cys599, Cys569-Cys579, Cys619-Cys750, Cys661-Cys677, Cys765-Cys831, Cys794-Cys808, and Cys821-Cys850. 4 consecutive SRCR domains span residues 170-271 (VRLR…MCSF), 280-381 (IRLV…SCTP), 387-487 (IRLA…ACYP), and 500-601 (VRLM…ICDY). Positions 619-630 (CGLRLLHRRQKR) are zymogen activation region. Positions 631-874 (IIGGKNSLRG…FVPWIKSVTK (244 aa)) constitute a Peptidase S1 domain. His676 serves as the catalytic Charge relay system. N-linked (GlcNAc...) asparagine glycosylation is present at Asn683. Asp726 functions as the Charge relay system in the catalytic mechanism. The active-site Charge relay system is the Ser825.

This sequence belongs to the peptidase S1 family.

It localises to the secreted. Its function is as follows. Plays a role in neuronal plasticity and the proteolytic action may subserve structural reorganizations associated with learning and memory operations. The sequence is that of Neurotrypsin (PRSS12) from Saguinus labiatus (Red-chested mustached tamarin).